Reading from the N-terminus, the 424-residue chain is Sulfatase ppz1 (424 aa).

Asp-13, Asp-203, and Asn-204 together coordinate Ca(2+).

This sequence belongs to the sulfatase family. Ca(2+) is required as a cofactor.

In terms of biological role, sulfatase; part of the gene cluster that mediates the biosynthesis of pyrrolopyrazines, secondary metabolites showing insecticidal activity. The role of ppz1 within the pathway has still to be determined. The single multifunctional NRPS ppzA is sufficient to produce peramine via condensation of 1-pyrroline-5-carboxylate and arginine, N-methylation of the alpha-amino group of arginine and reduction of the thioester and the cyclization to form an iminium ion resulting in release from the peptide synthetase. Deprotonation of this intermediate and oxidation of the pyrroline ring would give rise to peramine. In Epichloe species that produce only peramine, the peramine synthetase gene is not localized in a gene cluster, in contrast to Metarhizium species that contain additional pyrrolopyrazine biosynthesis genes. The 2-oxoglutarate-Fe(II) type oxidoreductase ppzC hydroxylates peramine to yield the newly identified compound 8-hydroxyperamine whereas ppzD converts L-proline into trans-4-hydroxy-L-proline, a precursor of peramine biosynthesis. The sequence is that of Sulfatase ppz1 from Metarhizium majus (strain ARSEF 297).